The chain runs to 165 residues: Ribosome maturation factor RimM (165 aa).

The 72-residue stretch at 94–165 folds into the PRC barrel domain; it reads EDEFYIADLN…YVILNYQTKV (72 aa).

It belongs to the RimM family. Binds ribosomal protein uS19.

Its subcellular location is the cytoplasm. An accessory protein needed during the final step in the assembly of 30S ribosomal subunit, possibly for assembly of the head region. Essential for efficient processing of 16S rRNA. May be needed both before and after RbfA during the maturation of 16S rRNA. It has affinity for free ribosomal 30S subunits but not for 70S ribosomes. This is Ribosome maturation factor RimM from Rickettsia prowazekii (strain Madrid E).